The primary structure comprises 194 residues: Small ribosomal subunit protein uS4c (194 aa).

Positions M82 to N143 constitute an S4 RNA-binding domain.

This sequence belongs to the universal ribosomal protein uS4 family. In terms of assembly, part of the 30S ribosomal subunit. Contacts protein S5. The interaction surface between S4 and S5 is involved in control of translational fidelity.

It is found in the plastid. The protein localises to the chloroplast. One of the primary rRNA binding proteins, it binds directly to 16S rRNA where it nucleates assembly of the body of the 30S subunit. Its function is as follows. With S5 and S12 plays an important role in translational accuracy. In Trimezia steyermarkii (Steyermark's trimezia), this protein is Small ribosomal subunit protein uS4c (rps4).